We begin with the raw amino-acid sequence, 711 residues long: Early transcription factor 82 kDa subunit (711 aa).

It belongs to the poxviridae VETF large subunit family. As to quaternary structure, heterodimer of a 70 kDa and a 82 kDa subunit. Part of the early transcription complex composed of ETF, RAP94, and the DNA-directed RNA polymerase.

Functionally, acts with RNA polymerase to initiate transcription from early gene promoters. Is recruited by the RPO-associated protein of 94 kDa (RAP94) to form the early transcription complex, which also contains the core RNA polymerase. ETF heterodimer binds to early gene promoters. The chain is Early transcription factor 82 kDa subunit (VETFL) from Oryctolagus cuniculus (Rabbit).